A 494-amino-acid chain; its full sequence is Alpha-amylase-related protein (494 aa).

The first 20 residues, Met-1 to Ala-20, serve as a signal peptide directing secretion. Gln-21 is modified (pyrrolidone carboxylic acid). Residues Cys-48 and Cys-104 are joined by a disulfide bond. Residues Asn-118, Gln-169, and Asp-178 each contribute to the Ca(2+) site. Cys-157 and Cys-171 are disulfide-bonded. Arg-206 contributes to the chloride binding site. Asp-208 (nucleophile) is an active-site residue. Position 212 (His-212) interacts with Ca(2+). Catalysis depends on Glu-245, which acts as the Proton donor. Asn-308 and Arg-343 together coordinate chloride. Cystine bridges form between Cys-376–Cys-382, Cys-418–Cys-441, and Cys-448–Cys-460.

Belongs to the glycosyl hydrolase 13 family. Monomer. It depends on Ca(2+) as a cofactor. Chloride serves as cofactor.

Its subcellular location is the secreted. It carries out the reaction Endohydrolysis of (1-&gt;4)-alpha-D-glucosidic linkages in polysaccharides containing three or more (1-&gt;4)-alpha-linked D-glucose units.. This chain is Alpha-amylase-related protein (Amyrel), found in Drosophila bocqueti (Fruit fly).